Reading from the N-terminus, the 676-residue chain is DNA ligase (676 aa).

A compositionally biased stretch (basic and acidic residues) spans M1–G10. The disordered stretch occupies residues M1–P23. NAD(+) is bound by residues D52–D56 and S95–L96. Residue K148 is the N6-AMP-lysine intermediate of the active site. The NAD(+) site is built by R169, E203, and K330. Zn(2+) is bound by residues C420, C423, C436, and C441. In terms of domain architecture, BRCT spans E593–G676.

The protein belongs to the NAD-dependent DNA ligase family. LigA subfamily. Mg(2+) serves as cofactor. Mn(2+) is required as a cofactor.

The catalysed reaction is NAD(+) + (deoxyribonucleotide)n-3'-hydroxyl + 5'-phospho-(deoxyribonucleotide)m = (deoxyribonucleotide)n+m + AMP + beta-nicotinamide D-nucleotide.. DNA ligase that catalyzes the formation of phosphodiester linkages between 5'-phosphoryl and 3'-hydroxyl groups in double-stranded DNA using NAD as a coenzyme and as the energy source for the reaction. It is essential for DNA replication and repair of damaged DNA. In Sorangium cellulosum (strain So ce56) (Polyangium cellulosum (strain So ce56)), this protein is DNA ligase.